The chain runs to 886 residues: Peptidyl-lysine N-acetyltransferase PatZ (886 aa).

Positions 487–523 (QPILQAYGMNTLPTWIASDSTEAVHIAEQIGYPVALK) constitute an ATP-grasp domain. An N-acetyltransferase domain is found at 726-881 (CLFRPILPED…GIVGLTLNLA (156 aa)).

This sequence in the N-terminal section; belongs to the acetate CoA ligase alpha subunit family. The protein in the central section; belongs to the acetate CoA ligase beta subunit family. Stable tetramer in solution. Oligomerizes to an octameric form by autoacetylation. Autoacetylated. Deacetylated by CobB.

It catalyses the reaction L-lysyl-[protein] + acetyl-CoA = N(6)-acetyl-L-lysyl-[protein] + CoA + H(+). Its function is as follows. Catalyzes the acetyl-CoA-dependent acetylation of lysine residues of a large number of target proteins. Acetylates RNase R in exponential phase cells and RNase II. Required for the glucose-dependent acetylation on multiple lysines of alpha, beta and beta' RNAP subunits. Also acetylates acetyl-coenzyme A synthetase (Acs) and the chromosomal replication initiator protein DnaA, and inhibits their activity. Overexpression leads to the acetylation of a large number of additional proteins and inhibits motility. In Escherichia coli (strain K12), this protein is Peptidyl-lysine N-acetyltransferase PatZ.